A 559-amino-acid chain; its full sequence is Hepatocyte nuclear factor 1-beta (559 aa).

Positions 1–31 are dimerization; it reads MVSKLTSLQQELLSALLSSGVTKEVLVQALE. Residues 1 to 32 form the HNF-p1 domain; that stretch reads MVSKLTSLQQELLSALLSSGVTKEVLVQALEE. 4 positions are modified to phosphoserine: serine 49, serine 52, serine 75, and serine 80. The POU-specific atypical domain maps to 93-188; the sequence is KELQALNTEE…ILRQFNQTVQ (96 aa). Positions 231-312 form a DNA-binding region, homeobox; HNF1-type; the sequence is MRRNRFKWGP…RRKEEEAFRQ (82 aa). The span at 328–341 shows a compositional bias: low complexity; that stretch reads NTLLSHSSPHHQPS. A disordered region spans residues 328–371; that stretch reads NTLLSHSSPHHQPSTSPPNKLPGVRYNQQGNNEVTSSSTISHHG. Positions 353-371 are enriched in polar residues; sequence YNQQGNNEVTSSSTISHHG.

The protein belongs to the HNF1 homeobox family. In terms of assembly, binds DNA as a dimer. Can form homodimer or heterodimer with HNF1-alpha. Interacts (via HNF-p1 domain) with PCBD1; the interaction increases its transactivation activity.

The protein localises to the nucleus. In terms of biological role, transcription factor that binds to the inverted palindrome 5'-GTTAATNATTAAC-3'. Binds to the FPC element in the cAMP regulatory unit of the PLAU gene. Transcriptional activity is increased by coactivator PCBD1. The sequence is that of Hepatocyte nuclear factor 1-beta (HNF1B) from Sus scrofa (Pig).